Here is a 122-residue protein sequence, read N- to C-terminus: Large ribosomal subunit protein uL14 (122 aa).

Belongs to the universal ribosomal protein uL14 family. In terms of assembly, part of the 50S ribosomal subunit. Forms a cluster with proteins L3 and L19. In the 70S ribosome, L14 and L19 interact and together make contacts with the 16S rRNA in bridges B5 and B8.

Binds to 23S rRNA. Forms part of two intersubunit bridges in the 70S ribosome. This chain is Large ribosomal subunit protein uL14, found in Methylibium petroleiphilum (strain ATCC BAA-1232 / LMG 22953 / PM1).